A 1094-amino-acid chain; its full sequence is Probable arabinosyltransferase C (1094 aa).

The next 13 membrane-spanning stretches (helical) occupy residues 28-50 (IARYVAVVAGLLGAVLAIATPLL), 232-251 (AAMILGVALTGAALVALHIL), 264-286 (PARWWSTGGLDTLVIAVLVWWHF), 341-360 (SIWMRLPTLAMALTCWWVIS), 373-392 (TSRAAAWTAAGMFLAVWLPL), 431-453 (IGALTLFSGPTGIASIGALLVAI), 466-488 (RFGVLPLVAPILAAATVTAIPIF), 530-552 (SIARRFAVLALVLALAVSVAMSL), 565-582 (SRRIIGITIISFLAMMFT), 586-608 (WTHHFGVFAGLAGSLGALAAVAV), 620-642 (TVFAAVVVFVLALSFASVNGWWY), 657-679 (WRWSLTTALLELTVLVLLLAAWF), and 700-722 (LAGIVQSPLAIATWLLVLFEVVS). Low complexity predominate over residues 817–831 (GSEPGTEGGTTAAPG). Residues 817–836 (GSEPGTEGGTTAAPGINGSR) are disordered.

It belongs to the emb family.

It is found in the cell membrane. Arabinosyl transferase responsible for the polymerization of arabinose into the arabinan of arabinogalactan. In Mycobacterium tuberculosis (strain ATCC 25618 / H37Rv), this protein is Probable arabinosyltransferase C (embC).